The chain runs to 146 residues: Actin-depolymerizing factor 6 (146 aa).

Serine 13 is subject to Phosphoserine. Residues glycine 14–asparagine 146 enclose the ADF-H domain.

This sequence belongs to the actin-binding proteins ADF family. Phosphorylated. As to expression, expressed in vascular tissues of all organs.

It is found in the cytoplasm. The protein resides in the cytoskeleton. Functionally, actin-depolymerizing protein. Severs actin filaments (F-actin) and binds to actin monomers. This Arabidopsis thaliana (Mouse-ear cress) protein is Actin-depolymerizing factor 6 (ADF6).